The chain runs to 280 residues: Ribosomal RNA small subunit methyltransferase A (280 aa).

6 residues coordinate S-adenosyl-L-methionine: histidine 13, leucine 15, glycine 40, glutamate 61, aspartate 85, and asparagine 105.

Belongs to the class I-like SAM-binding methyltransferase superfamily. rRNA adenine N(6)-methyltransferase family. RsmA subfamily.

It localises to the cytoplasm. The enzyme catalyses adenosine(1518)/adenosine(1519) in 16S rRNA + 4 S-adenosyl-L-methionine = N(6)-dimethyladenosine(1518)/N(6)-dimethyladenosine(1519) in 16S rRNA + 4 S-adenosyl-L-homocysteine + 4 H(+). Functionally, specifically dimethylates two adjacent adenosines (A1518 and A1519) in the loop of a conserved hairpin near the 3'-end of 16S rRNA in the 30S particle. May play a critical role in biogenesis of 30S subunits. This Phocaeicola vulgatus (strain ATCC 8482 / DSM 1447 / JCM 5826 / CCUG 4940 / NBRC 14291 / NCTC 11154) (Bacteroides vulgatus) protein is Ribosomal RNA small subunit methyltransferase A.